Reading from the N-terminus, the 1872-residue chain is Ral GTPase-activating protein subunit alpha-2 (1872 aa).

Phosphoserine occurs at positions 373, 376, and 379. Positions 446-469 (DKKDVAEEDADKLGLSETDSKEVS) are enriched in basic and acidic residues. A disordered region spans residues 446–481 (DKKDVAEEDADKLGLSETDSKEVSSESSGHKRSSSW). Phosphoserine occurs at positions 486 and 696. Disordered stretches follow at residues 711–730 (FRSA…NTVR) and 758–849 (QPVP…TGSD). At T715 the chain carries Phosphothreonine; by PKB. Over residues 775 to 795 (SDSSQGQKVENSQNLSSSEPK) the composition is skewed to polar residues. The segment covering 796–810 (SVQESKGHVTHEHEG) has biased composition (basic and acidic residues). 2 positions are modified to phosphoserine: S819 and S820. The span at 824–843 (LDLKEESQQTHGRCRERQKS) shows a compositional bias: basic and acidic residues. S1592 is subject to Phosphoserine. The 209-residue stretch at 1634–1842 (LKNLDSRQCR…EERALYLEAI (209 aa)) folds into the Rap-GAP domain.

Component of the heterodimeric RalGAP2 complex with RALGAPB. Heterodimerization is required for activity. In terms of tissue distribution, highly expressed in lung, liver, testis and thymus with lower levels in brain and heart (at protein level).

It localises to the cytoplasm. Catalytic subunit of the heterodimeric RalGAP2 complex which acts as a GTPase activator for the Ras-like small GTPases RALA and RALB. In Rattus norvegicus (Rat), this protein is Ral GTPase-activating protein subunit alpha-2.